The following is a 147-amino-acid chain: D-aminoacyl-tRNA deacylase (147 aa).

Positions 137–138 (GP) match the Gly-cisPro motif, important for rejection of L-amino acids motif.

This sequence belongs to the DTD family. In terms of assembly, homodimer.

It is found in the cytoplasm. The catalysed reaction is glycyl-tRNA(Ala) + H2O = tRNA(Ala) + glycine + H(+). It catalyses the reaction a D-aminoacyl-tRNA + H2O = a tRNA + a D-alpha-amino acid + H(+). Its function is as follows. An aminoacyl-tRNA editing enzyme that deacylates mischarged D-aminoacyl-tRNAs. Also deacylates mischarged glycyl-tRNA(Ala), protecting cells against glycine mischarging by AlaRS. Acts via tRNA-based rather than protein-based catalysis; rejects L-amino acids rather than detecting D-amino acids in the active site. By recycling D-aminoacyl-tRNA to D-amino acids and free tRNA molecules, this enzyme counteracts the toxicity associated with the formation of D-aminoacyl-tRNA entities in vivo and helps enforce protein L-homochirality. The polypeptide is D-aminoacyl-tRNA deacylase (Acinetobacter baumannii (strain ACICU)).